A 186-amino-acid chain; its full sequence is Ribosome-recycling factor (186 aa).

Belongs to the RRF family.

The protein resides in the cytoplasm. Responsible for the release of ribosomes from messenger RNA at the termination of protein biosynthesis. May increase the efficiency of translation by recycling ribosomes from one round of translation to another. The chain is Ribosome-recycling factor from Janthinobacterium sp. (strain Marseille) (Minibacterium massiliensis).